Consider the following 286-residue polypeptide: Elongation factor Ts (286 aa).

An involved in Mg(2+) ion dislocation from EF-Tu region spans residues 79 to 82 (TDFV).

It belongs to the EF-Ts family.

It is found in the cytoplasm. Functionally, associates with the EF-Tu.GDP complex and induces the exchange of GDP to GTP. It remains bound to the aminoacyl-tRNA.EF-Tu.GTP complex up to the GTP hydrolysis stage on the ribosome. The chain is Elongation factor Ts from Wolbachia sp. subsp. Drosophila simulans (strain wRi).